The following is a 281-amino-acid chain: MTSYYYSRSLANVNKLADNTKAAARKLLDWSESNGIEVLIYETIRTKEQQAANVNSGASQTMRSYHLVGQALDFVMAKGKTVDWGAYRSDKGKKFVAKAKSLGFEWGGDWSGFVDNPHLQFNYKGYGTDTFGKGASTSNSSKPSADTNTNSLGLVDYMNLNKLDSSFANRKKLATSYGIKNYSGTATQNTTLLAKLKAGKPHTPASKNTYYTENPRKVKTLVQCDLYKSVDFTTKNQTGGTFPPGTVFTISGMGKTKGGTPRLKTKSGYYLTANTKFVKKI.

Belongs to the peptidase M15C family.

It localises to the secreted. Cell wall lytic enzyme. Hydrolyzes the link between L-alanine and D-glutamate residues in certain bacterial cell-wall glycopeptides. In Listeria phage A118 (Bacteriophage A118), this protein is L-alanyl-D-glutamate peptidase (ply).